The primary structure comprises 273 residues: Aquaporin NIP1-4 (273 aa).

The next 2 membrane-spanning stretches (helical) occupy residues Leu-59–Val-79 and Val-86–Val-106. Residues Asn-115 to Ala-117 carry the NPA 1 motif. 3 helical membrane-spanning segments follow: residues Ala-133–Phe-155, Ser-174–Thr-194, and Ala-198–Ala-218. The NPA 2 motif lies at Asn-227–Ala-229. Residues Trp-245 to Ile-265 form a helical membrane-spanning segment.

It belongs to the MIP/aquaporin (TC 1.A.8) family. NIP (TC 1.A.8.12) subfamily. As to expression, expressed in leaves.

The protein resides in the membrane. Functionally, aquaporins facilitate the transport of water and small neutral solutes across cell membranes. In Oryza sativa subsp. japonica (Rice), this protein is Aquaporin NIP1-4 (NIP1-4).